Here is a 51-residue protein sequence, read N- to C-terminus: Large ribosomal subunit protein bL33 (51 aa).

The protein belongs to the bacterial ribosomal protein bL33 family.

In Alkalilimnicola ehrlichii (strain ATCC BAA-1101 / DSM 17681 / MLHE-1), this protein is Large ribosomal subunit protein bL33.